Consider the following 409-residue polypeptide: Tryptophan synthase beta chain (409 aa).

K98 bears the N6-(pyridoxal phosphate)lysine mark.

The protein belongs to the TrpB family. In terms of assembly, tetramer of two alpha and two beta chains. Requires pyridoxal 5'-phosphate as cofactor.

The enzyme catalyses (1S,2R)-1-C-(indol-3-yl)glycerol 3-phosphate + L-serine = D-glyceraldehyde 3-phosphate + L-tryptophan + H2O. It functions in the pathway amino-acid biosynthesis; L-tryptophan biosynthesis; L-tryptophan from chorismate: step 5/5. Functionally, the beta subunit is responsible for the synthesis of L-tryptophan from indole and L-serine. This chain is Tryptophan synthase beta chain, found in Jannaschia sp. (strain CCS1).